Here is a 74-residue protein sequence, read N- to C-terminus: MTKNKNVIEVEGKVVECLRSAMFTVELENGHQVLAHISGKIRKNYIKIMLEDRVLVELPPYDLTRGRIVFRYRN.

The region spanning 1-73 (MTKNKNVIEV…TRGRIVFRYR (73 aa)) is the S1-like domain.

Belongs to the IF-1 family. Component of the 30S ribosomal translation pre-initiation complex which assembles on the 30S ribosome in the order IF-2 and IF-3, IF-1 and N-formylmethionyl-tRNA(fMet); mRNA recruitment can occur at any time during PIC assembly.

The protein resides in the cytoplasm. In terms of biological role, one of the essential components for the initiation of protein synthesis. Stabilizes the binding of IF-2 and IF-3 on the 30S subunit to which N-formylmethionyl-tRNA(fMet) subsequently binds. Helps modulate mRNA selection, yielding the 30S pre-initiation complex (PIC). Upon addition of the 50S ribosomal subunit IF-1, IF-2 and IF-3 are released leaving the mature 70S translation initiation complex. This Streptomyces avermitilis (strain ATCC 31267 / DSM 46492 / JCM 5070 / NBRC 14893 / NCIMB 12804 / NRRL 8165 / MA-4680) protein is Translation initiation factor IF-1 2.